The sequence spans 320 residues: Cytochrome f (320 aa).

Positions 1 to 35 are cleaved as a signal peptide; it reads MQNRNTFSWVKDQMSRFISVSIMIYVITRTSISNA. Heme-binding residues include Y36, C56, C59, and H60. Residues 286-306 traverse the membrane as a helical segment; sequence VQGLLFFFASVILAQIFLVLK.

The protein belongs to the cytochrome f family. In terms of assembly, the 4 large subunits of the cytochrome b6-f complex are cytochrome b6, subunit IV (17 kDa polypeptide, petD), cytochrome f and the Rieske protein, while the 4 small subunits are PetG, PetL, PetM and PetN. The complex functions as a dimer. Requires heme as cofactor.

It is found in the plastid. It localises to the chloroplast thylakoid membrane. Its function is as follows. Component of the cytochrome b6-f complex, which mediates electron transfer between photosystem II (PSII) and photosystem I (PSI), cyclic electron flow around PSI, and state transitions. The polypeptide is Cytochrome f (Ceratophyllum demersum (Rigid hornwort)).